The chain runs to 259 residues: Dickkopf-related protein 2 (259 aa).

Residues 1–33 (MAALMRSKDSSCCLLLLAAVLMVESSQIGSSRA) form the signal peptide. A glycan (N-linked (GlcNAc...) asparagine) is linked at Asn-52. A DKK-type Cys-1 region spans residues 78–127 (CSSDKECEVGRYCHSPHQGSSACMVCRRKKKRCHRDGMCCPSTRCNNGIC). 5 disulfide bridges follow: Cys-183/Cys-195, Cys-189/Cys-204, Cys-194/Cys-231, Cys-214/Cys-239, and Cys-233/Cys-256. Residues 183–256 (CLRSSDCIEG…YSSKARLHVC (74 aa)) form a DKK-type Cys-2 region.

The protein belongs to the dickkopf family. Interacts with LRP5 and LRP6. In terms of processing, may be proteolytically processed by a furin-like protease. As to expression, expressed in heart, brain, skeletal muscle and lung.

Its subcellular location is the secreted. Antagonizes canonical Wnt signaling by inhibiting LRP5/6 interaction with Wnt and by forming a ternary complex with the transmembrane protein KREMEN that promotes internalization of LRP5/6. DKKs play an important role in vertebrate development, where they locally inhibit Wnt regulated processes such as antero-posterior axial patterning, limb development, somitogenesis and eye formation. In the adult, Dkks are implicated in bone formation and bone disease, cancer and Alzheimer disease. The polypeptide is Dickkopf-related protein 2 (DKK2) (Homo sapiens (Human)).